Reading from the N-terminus, the 156-residue chain is Large ribosomal subunit protein uL15 (156 aa).

The disordered stretch occupies residues 1–44; that stretch reads MKLNELRDNPGASPKRTRVGRGPGSGKGKMGGRGIKGQKSRSGV. Gly residues predominate over residues 21-35; sequence RGPGSGKGKMGGRGI.

The protein belongs to the universal ribosomal protein uL15 family. As to quaternary structure, part of the 50S ribosomal subunit.

Binds to the 23S rRNA. The chain is Large ribosomal subunit protein uL15 from Ruegeria sp. (strain TM1040) (Silicibacter sp.).